The primary structure comprises 484 residues: AMP nucleosidase (484 aa).

Belongs to the AMP nucleosidase family.

It catalyses the reaction AMP + H2O = adenine + D-ribose 5-phosphate. In terms of biological role, catalyzes the hydrolysis of the N-glycosidic bond of AMP to form adenine and ribose 5-phosphate. Involved in regulation of AMP concentrations. The protein is AMP nucleosidase of Escherichia coli O157:H7.